The primary structure comprises 768 residues: ATP-dependent zinc metalloprotease FtsH (768 aa).

Topologically, residues 1–33 (MADRDKNDIRKRLEELRKDNNRRNNRQDNGNRS) are cytoplasmic. Residues 34–54 (PFSGFLFFIFVILLFTFTLLF) traverse the membrane as a helical segment. Topologically, residues 55-139 (HRDIQTYFQE…KLNSLQPSGG (85 aa)) are periplasmic. A helical membrane pass occupies residues 140 to 160 (GFFLLLLGQFLPMIIMIGLMV). At 161-768 (YLAKKMVGGS…SNFKLPSFME (608 aa)) the chain is on the cytoplasmic side. An ATP-binding site is contributed by 238–245 (GRPGTGKT). His461 is a binding site for Zn(2+). The active site involves Glu462. Positions 465 and 536 each coordinate Zn(2+). The segment at 647–768 (EESIQKGSEG…SNFKLPSFME (122 aa)) is disordered. Residues 669-698 (QENKTVEAEVHDSNLKSDTEKLAEAVREIT) show a composition bias toward basic and acidic residues. Acidic residues predominate over residues 715 to 731 (KDSDDNEKNDDDNENSD).

In the central section; belongs to the AAA ATPase family. The protein in the C-terminal section; belongs to the peptidase M41 family. As to quaternary structure, homohexamer. It depends on Zn(2+) as a cofactor.

The protein resides in the cell inner membrane. In terms of biological role, acts as a processive, ATP-dependent zinc metallopeptidase for both cytoplasmic and membrane proteins. Plays a role in the quality control of integral membrane proteins. The chain is ATP-dependent zinc metalloprotease FtsH from Leptotrichia buccalis (strain ATCC 14201 / DSM 1135 / JCM 12969 / NCTC 10249 / C-1013-b).